Reading from the N-terminus, the 354-residue chain is Uroporphyrinogen decarboxylase (354 aa).

Residues 27 to 31 (RQAGR), Asp77, Tyr154, Ser209, and His327 each bind substrate.

This sequence belongs to the uroporphyrinogen decarboxylase family. Homodimer.

It is found in the cytoplasm. The enzyme catalyses uroporphyrinogen III + 4 H(+) = coproporphyrinogen III + 4 CO2. Its pathway is porphyrin-containing compound metabolism; protoporphyrin-IX biosynthesis; coproporphyrinogen-III from 5-aminolevulinate: step 4/4. Its function is as follows. Catalyzes the decarboxylation of four acetate groups of uroporphyrinogen-III to yield coproporphyrinogen-III. This is Uroporphyrinogen decarboxylase from Shewanella piezotolerans (strain WP3 / JCM 13877).